Reading from the N-terminus, the 202-residue chain is Imidazoleglycerol-phosphate dehydratase (202 aa).

It belongs to the imidazoleglycerol-phosphate dehydratase family.

The protein localises to the cytoplasm. It carries out the reaction D-erythro-1-(imidazol-4-yl)glycerol 3-phosphate = 3-(imidazol-4-yl)-2-oxopropyl phosphate + H2O. It functions in the pathway amino-acid biosynthesis; L-histidine biosynthesis; L-histidine from 5-phospho-alpha-D-ribose 1-diphosphate: step 6/9. The protein is Imidazoleglycerol-phosphate dehydratase of Brucella suis (strain ATCC 23445 / NCTC 10510).